The primary structure comprises 443 residues: Trigger factor (443 aa).

The PPIase FKBP-type domain maps to 165 to 250 (GDQIVMDFLG…VKEVKKPVPA (86 aa)).

The protein belongs to the FKBP-type PPIase family. Tig subfamily.

Its subcellular location is the cytoplasm. The catalysed reaction is [protein]-peptidylproline (omega=180) = [protein]-peptidylproline (omega=0). Involved in protein export. Acts as a chaperone by maintaining the newly synthesized protein in an open conformation. Functions as a peptidyl-prolyl cis-trans isomerase. This is Trigger factor from Roseobacter denitrificans (strain ATCC 33942 / OCh 114) (Erythrobacter sp. (strain OCh 114)).